A 48-amino-acid chain; its full sequence is SPbeta prophage-derived uncharacterized protein YotE (48 aa).

The sequence is that of SPbeta prophage-derived uncharacterized protein YotE (yotE) from Bacillus subtilis (strain 168).